A 794-amino-acid chain; its full sequence is uncharacterized protein (794 aa).

The next 9 membrane-spanning stretches (helical) occupy residues 34–54 (FSAS…VFAV), 67–87 (ITAA…AHLI), 99–119 (MLAD…AFAS), 132–152 (LFLF…ADVT), 257–277 (VGPS…AMGL), 283–303 (LAWI…MFQL), 315–335 (WSVN…VLVF), 353–373 (LGAL…ATLF), and 421–441 (WTGT…LMGV).

The protein localises to the cell membrane. This is an uncharacterized protein from Corynebacterium glutamicum (strain ATCC 13032 / DSM 20300 / JCM 1318 / BCRC 11384 / CCUG 27702 / LMG 3730 / NBRC 12168 / NCIMB 10025 / NRRL B-2784 / 534).